Reading from the N-terminus, the 418-residue chain is Replication factor C large subunit (418 aa).

47-54 (GSQGTGKT) contributes to the ATP binding site.

The protein belongs to the activator 1 small subunits family. RfcL subfamily. As to quaternary structure, heteromultimer composed of small subunits (RfcS) and large subunits (RfcL).

Functionally, part of the RFC clamp loader complex which loads the PCNA sliding clamp onto DNA. This is Replication factor C large subunit from Thermoplasma acidophilum (strain ATCC 25905 / DSM 1728 / JCM 9062 / NBRC 15155 / AMRC-C165).